The following is a 221-amino-acid chain: Thiamine-phosphate synthase (221 aa).

4-amino-2-methyl-5-(diphosphooxymethyl)pyrimidine-binding positions include 44-48 (QFREK) and Asn-79. Residues Asp-80 and Asp-99 each coordinate Mg(2+). Ser-117 is a binding site for 4-amino-2-methyl-5-(diphosphooxymethyl)pyrimidine. 143-145 (TSS) lines the 2-[(2R,5Z)-2-carboxy-4-methylthiazol-5(2H)-ylidene]ethyl phosphate pocket. Lys-146 lines the 4-amino-2-methyl-5-(diphosphooxymethyl)pyrimidine pocket. Residues Gly-175 and 195-196 (IS) contribute to the 2-[(2R,5Z)-2-carboxy-4-methylthiazol-5(2H)-ylidene]ethyl phosphate site.

It belongs to the thiamine-phosphate synthase family. It depends on Mg(2+) as a cofactor.

It catalyses the reaction 2-[(2R,5Z)-2-carboxy-4-methylthiazol-5(2H)-ylidene]ethyl phosphate + 4-amino-2-methyl-5-(diphosphooxymethyl)pyrimidine + 2 H(+) = thiamine phosphate + CO2 + diphosphate. The catalysed reaction is 2-(2-carboxy-4-methylthiazol-5-yl)ethyl phosphate + 4-amino-2-methyl-5-(diphosphooxymethyl)pyrimidine + 2 H(+) = thiamine phosphate + CO2 + diphosphate. The enzyme catalyses 4-methyl-5-(2-phosphooxyethyl)-thiazole + 4-amino-2-methyl-5-(diphosphooxymethyl)pyrimidine + H(+) = thiamine phosphate + diphosphate. The protein operates within cofactor biosynthesis; thiamine diphosphate biosynthesis; thiamine phosphate from 4-amino-2-methyl-5-diphosphomethylpyrimidine and 4-methyl-5-(2-phosphoethyl)-thiazole: step 1/1. In terms of biological role, condenses 4-methyl-5-(beta-hydroxyethyl)thiazole monophosphate (THZ-P) and 2-methyl-4-amino-5-hydroxymethyl pyrimidine pyrophosphate (HMP-PP) to form thiamine monophosphate (TMP). The sequence is that of Thiamine-phosphate synthase from Geobacillus kaustophilus (strain HTA426).